A 503-amino-acid polypeptide reads, in one-letter code: Aspartyl/glutamyl-tRNA(Asn/Gln) amidotransferase subunit B (503 aa).

It belongs to the GatB/GatE family. GatB subfamily. As to quaternary structure, heterotrimer of A, B and C subunits.

It catalyses the reaction L-glutamyl-tRNA(Gln) + L-glutamine + ATP + H2O = L-glutaminyl-tRNA(Gln) + L-glutamate + ADP + phosphate + H(+). It carries out the reaction L-aspartyl-tRNA(Asn) + L-glutamine + ATP + H2O = L-asparaginyl-tRNA(Asn) + L-glutamate + ADP + phosphate + 2 H(+). Functionally, allows the formation of correctly charged Asn-tRNA(Asn) or Gln-tRNA(Gln) through the transamidation of misacylated Asp-tRNA(Asn) or Glu-tRNA(Gln) in organisms which lack either or both of asparaginyl-tRNA or glutaminyl-tRNA synthetases. The reaction takes place in the presence of glutamine and ATP through an activated phospho-Asp-tRNA(Asn) or phospho-Glu-tRNA(Gln). In Jannaschia sp. (strain CCS1), this protein is Aspartyl/glutamyl-tRNA(Asn/Gln) amidotransferase subunit B.